Reading from the N-terminus, the 302-residue chain is Cell division protein FtsQ (302 aa).

The Cytoplasmic portion of the chain corresponds to 1 to 43 (MRPVDKKPVDRKIERETRYLRRDPAPSRWSYRYQRLMLTPAFR). The chain crosses the membrane as a helical span at residues 44–64 (AGVRLGTPVIIIALAVAVVFG). The Periplasmic portion of the chain corresponds to 65–302 (RADSRDWIMG…SMPGRSAGRG (238 aa)). The region spanning 89 to 156 (FMVGSFAITG…GVLQIVIEER (68 aa)) is the POTRA domain.

This sequence belongs to the FtsQ/DivIB family. FtsQ subfamily.

The protein resides in the cell inner membrane. Functionally, essential cell division protein. The protein is Cell division protein FtsQ of Ketogulonicigenium vulgare (strain Y25).